Consider the following 645-residue polypeptide: DNA mismatch repair protein MutL (645 aa).

The protein belongs to the DNA mismatch repair MutL/HexB family.

Its function is as follows. This protein is involved in the repair of mismatches in DNA. It is required for dam-dependent methyl-directed DNA mismatch repair. May act as a 'molecular matchmaker', a protein that promotes the formation of a stable complex between two or more DNA-binding proteins in an ATP-dependent manner without itself being part of a final effector complex. The protein is DNA mismatch repair protein MutL of Pediococcus pentosaceus (strain ATCC 25745 / CCUG 21536 / LMG 10740 / 183-1w).